We begin with the raw amino-acid sequence, 182 residues long: Large ribosomal subunit protein uL5 (182 aa).

This sequence belongs to the universal ribosomal protein uL5 family. In terms of assembly, part of the 50S ribosomal subunit; part of the 5S rRNA/L5/L18/L25 subcomplex. Contacts the 5S rRNA and the P site tRNA. Forms a bridge to the 30S subunit in the 70S ribosome.

In terms of biological role, this is one of the proteins that bind and probably mediate the attachment of the 5S RNA into the large ribosomal subunit, where it forms part of the central protuberance. In the 70S ribosome it contacts protein S13 of the 30S subunit (bridge B1b), connecting the 2 subunits; this bridge is implicated in subunit movement. Contacts the P site tRNA; the 5S rRNA and some of its associated proteins might help stabilize positioning of ribosome-bound tRNAs. In Borrelia garinii subsp. bavariensis (strain ATCC BAA-2496 / DSM 23469 / PBi) (Borreliella bavariensis), this protein is Large ribosomal subunit protein uL5.